A 385-amino-acid chain; its full sequence is Probable tRNA sulfurtransferase (385 aa).

Positions 57-161 (NESIKRLSNV…NKNAYVWSNK (105 aa)) constitute a THUMP domain. ATP is bound by residues 181–182 (ML), 206–207 (YY), arginine 263, glycine 285, and glutamine 294.

Belongs to the ThiI family.

The protein resides in the cytoplasm. The catalysed reaction is [ThiI sulfur-carrier protein]-S-sulfanyl-L-cysteine + a uridine in tRNA + 2 reduced [2Fe-2S]-[ferredoxin] + ATP + H(+) = [ThiI sulfur-carrier protein]-L-cysteine + a 4-thiouridine in tRNA + 2 oxidized [2Fe-2S]-[ferredoxin] + AMP + diphosphate. It catalyses the reaction [ThiS sulfur-carrier protein]-C-terminal Gly-Gly-AMP + S-sulfanyl-L-cysteinyl-[cysteine desulfurase] + AH2 = [ThiS sulfur-carrier protein]-C-terminal-Gly-aminoethanethioate + L-cysteinyl-[cysteine desulfurase] + A + AMP + 2 H(+). Its pathway is cofactor biosynthesis; thiamine diphosphate biosynthesis. Functionally, catalyzes the ATP-dependent transfer of a sulfur to tRNA to produce 4-thiouridine in position 8 of tRNAs, which functions as a near-UV photosensor. Also catalyzes the transfer of sulfur to the sulfur carrier protein ThiS, forming ThiS-thiocarboxylate. This is a step in the synthesis of thiazole, in the thiamine biosynthesis pathway. The sulfur is donated as persulfide by IscS. The sequence is that of Probable tRNA sulfurtransferase from Clostridium botulinum (strain Alaska E43 / Type E3).